Here is a 107-residue protein sequence, read N- to C-terminus: Nucleoid-associated protein Oant_0022 (107 aa).

This sequence belongs to the YbaB/EbfC family. In terms of assembly, homodimer.

It localises to the cytoplasm. Its subcellular location is the nucleoid. Its function is as follows. Binds to DNA and alters its conformation. May be involved in regulation of gene expression, nucleoid organization and DNA protection. The protein is Nucleoid-associated protein Oant_0022 of Brucella anthropi (strain ATCC 49188 / DSM 6882 / CCUG 24695 / JCM 21032 / LMG 3331 / NBRC 15819 / NCTC 12168 / Alc 37) (Ochrobactrum anthropi).